The following is a 102-amino-acid chain: Small ribosomal subunit protein uS10 (102 aa).

This sequence belongs to the universal ribosomal protein uS10 family. In terms of assembly, part of the 30S ribosomal subunit.

Its function is as follows. Involved in the binding of tRNA to the ribosomes. The protein is Small ribosomal subunit protein uS10 of Bifidobacterium longum subsp. infantis (strain ATCC 15697 / DSM 20088 / JCM 1222 / NCTC 11817 / S12).